A 207-amino-acid polypeptide reads, in one-letter code: Large ribosomal subunit protein uL4 (207 aa).

The interval 48–70 (KAQKTRSEVSGGGAKPWRQKGTG) is disordered.

Belongs to the universal ribosomal protein uL4 family. Part of the 50S ribosomal subunit.

In terms of biological role, one of the primary rRNA binding proteins, this protein initially binds near the 5'-end of the 23S rRNA. It is important during the early stages of 50S assembly. It makes multiple contacts with different domains of the 23S rRNA in the assembled 50S subunit and ribosome. Functionally, forms part of the polypeptide exit tunnel. This Francisella tularensis subsp. mediasiatica (strain FSC147) protein is Large ribosomal subunit protein uL4.